Here is a 562-residue protein sequence, read N- to C-terminus: Glucan 1,3-beta-glucosidase 2 (562 aa).

The N-terminal stretch at 1 to 22 (MPLKSFFFSAFLVLCLSKFTQG) is a signal peptide. 7 N-linked (GlcNAc...) asparagine glycosylation sites follow: Asn50, Asn77, Asn86, Asn90, Asn106, Asn157, and Asn220. Glu254 serves as the catalytic Proton donor. Asn281, Asn285, Asn310, Asn317, and Asn322 each carry an N-linked (GlcNAc...) asparagine glycan. The Nucleophile role is filled by His334. N-linked (GlcNAc...) asparagine glycans are attached at residues Asn401, Asn480, and Asn539.

This sequence belongs to the glycosyl hydrolase 5 (cellulase A) family.

It localises to the cell membrane. The enzyme catalyses Successive hydrolysis of beta-D-glucose units from the non-reducing ends of (1-&gt;3)-beta-D-glucans, releasing alpha-glucose.. In Saccharomyces cerevisiae (strain ATCC 204508 / S288c) (Baker's yeast), this protein is Glucan 1,3-beta-glucosidase 2 (EXG2).